The primary structure comprises 459 residues: tRNA modification GTPase MnmE (459 aa).

The (6S)-5-formyl-5,6,7,8-tetrahydrofolate site is built by arginine 29, glutamate 86, and lysine 125. One can recognise a TrmE-type G domain in the interval 221–382 (GMNVVIAGRP…LTEHLKAVMG (162 aa)). Asparagine 231 serves as a coordination point for K(+). GTP contacts are provided by residues 231 to 236 (NAGKSS), 250 to 256 (TNIEGTT), and 275 to 278 (DTAG). Serine 235 lines the Mg(2+) pocket. K(+) contacts are provided by threonine 250, isoleucine 252, and threonine 255. A Mg(2+)-binding site is contributed by threonine 256. Lysine 459 lines the (6S)-5-formyl-5,6,7,8-tetrahydrofolate pocket.

It belongs to the TRAFAC class TrmE-Era-EngA-EngB-Septin-like GTPase superfamily. TrmE GTPase family. In terms of assembly, homodimer. Heterotetramer of two MnmE and two MnmG subunits. Requires K(+) as cofactor.

The protein localises to the cytoplasm. In terms of biological role, exhibits a very high intrinsic GTPase hydrolysis rate. Involved in the addition of a carboxymethylaminomethyl (cmnm) group at the wobble position (U34) of certain tRNAs, forming tRNA-cmnm(5)s(2)U34. This Marinomonas sp. (strain MWYL1) protein is tRNA modification GTPase MnmE.